Reading from the N-terminus, the 347-residue chain is Homoisocitrate dehydrogenase (347 aa).

68–70 is an NADH binding site; that stretch reads ITS. Position 70 (serine 70) interacts with (2R,3S)-homoisocitrate. Serine 81 is modified (phosphoserine). Positions 87, 97, 128, 135, 181, and 183 each coordinate (2R,3S)-homoisocitrate. An NADH-binding site is contributed by asparagine 183. Mg(2+)-binding residues include aspartate 213, aspartate 237, and aspartate 241. NADH contacts are provided by residues 270–274 and asparagine 282; that span reads GSAPD.

The protein belongs to the isocitrate and isopropylmalate dehydrogenases family. It depends on Mg(2+) as a cofactor.

The enzyme catalyses (2R,3S)-homoisocitrate + NAD(+) = 2-oxoadipate + CO2 + NADH. It carries out the reaction (2R,3S)-iso(homo)2citrate + NAD(+) = 2-oxoheptanedioate + CO2 + NADH. It catalyses the reaction (2R,3S)-iso(homo)3citrate + NAD(+) = 2-oxosuberate + CO2 + NADH. It functions in the pathway organic acid metabolism; 2-oxosuberate biosynthesis. Its function is as follows. Catalyzes the NAD-dependent oxidation and decarboxylation of (2R,3S)-homoisocitrate, (2R,3S)-homo(2)-isocitrate and (2R,3S)-homo(3)-isocitrate, into 2-oxoadipate, 2-oxopimelate (2-oxoheptanedioate), and 2-oxosuberate, respectively. All these substrates are intermediates in the biosynthesis of biotin and of 7-mercaptoheptanoate, a moiety of coenzyme B in methanoarchaea. Is also able to produce 2-oxoazelate from (2R,3S)-homo(4)-isocitrate in vitro, but this substrate is probably not physiologically relevant. Is unable to use any isomer of isocitrate or isopropylmalate as a substrate, and NADP as an oxidant. This is Homoisocitrate dehydrogenase (aksF) from Methanocaldococcus jannaschii (strain ATCC 43067 / DSM 2661 / JAL-1 / JCM 10045 / NBRC 100440) (Methanococcus jannaschii).